The primary structure comprises 132 residues: uncharacterized protein (132 aa).

Positions 1 to 35 (MSFEYRHYKREAKICTCRGGWAHVLLCIGVSQGAC) are cleaved as a signal peptide. Residues 91-132 (AHPGSHSDQPPGVPSRRKSRLERWSPSVSRSTSPPTEAPFCL) form a disordered region. Residues 115-125 (SPSVSRSTSPP) are compositionally biased toward low complexity.

The protein localises to the secreted. This is an uncharacterized protein from Homo sapiens (Human).